The primary structure comprises 315 residues: Large ribosomal subunit protein uL10 (315 aa).

Residues 285–294 show a composition bias toward low complexity; that stretch reads AAAPAASAAP. The segment at 285–315 is disordered; sequence AAAPAASAAPAKEEKEESEESDDDMGFGLFD. Residues 300-309 are compositionally biased toward acidic residues; sequence EESEESDDDM.

This sequence belongs to the universal ribosomal protein uL10 family. As to quaternary structure, P0 forms a pentameric complex by interaction with dimers of P1 and P2. Phosphorylated.

Ribosomal protein P0 is the functional equivalent of E.coli protein L10. The polypeptide is Large ribosomal subunit protein uL10 (RPLP0) (Lithobates sylvaticus (Wood frog)).